We begin with the raw amino-acid sequence, 173 residues long: Protein tyrosine phosphatase type IVA 3 (173 aa).

Positions 8-161 (APVEVSYKNM…YRPKQRLRFK (154 aa)) constitute a Tyrosine-protein phosphatase domain. An intrachain disulfide couples Cys49 to Cys104. The Proton donor role is filled by Asp72. Cys104 serves as the catalytic Phosphocysteine intermediate. Arg110 provides a ligand contact to substrate. Position 170 is a cysteine methyl ester (Cys170). The S-farnesyl cysteine moiety is linked to residue Cys170. A propeptide spans 171 to 173 (CIM) (removed in mature form).

It belongs to the protein-tyrosine phosphatase family. Interacts with tubulin. Farnesylated. Farnesylation is required for membrane targeting. Unfarnesylated forms are shifted into the nucleus.

It is found in the cell membrane. The protein localises to the early endosome. It catalyses the reaction O-phospho-L-tyrosyl-[protein] + H2O = L-tyrosyl-[protein] + phosphate. Inhibited by sodium orthovanadate and peroxovanadium compounds, and by pentamidine. In terms of biological role, protein tyrosine phosphatase which stimulates progression from G1 into S phase during mitosis. Enhances cell proliferation, cell motility and invasive activity, and promotes cancer metastasis. May be involved in the progression of cardiac hypertrophy by inhibiting intracellular calcium mobilization in response to angiotensin II. This chain is Protein tyrosine phosphatase type IVA 3 (PTP4A3), found in Bos taurus (Bovine).